We begin with the raw amino-acid sequence, 966 residues long: Protein mes-1 (966 aa).

The first 19 residues, 1–19, serve as a signal peptide directing secretion; that stretch reads MKIHHFLTLLCTFLPLTTT. Topologically, residues 20 to 470 are extracellular; that stretch reads ALTNSTPLSL…QASDIPTSVE (451 aa). Asn-62, Asn-126, Asn-183, Asn-214, Asn-251, and Asn-372 each carry an N-linked (GlcNAc...) asparagine glycan. The helical transmembrane segment at 471–491 threads the bilayer; the sequence is LMAVVLATSAIFALIALFLLY. The Cytoplasmic segment spans residues 492 to 966; that stretch reads RKRKRDKKAR…FKSVNVAATV (475 aa). The region spanning 656–966 is the Protein kinase domain; sequence HNFNERIEKQ…FKSVNVAATV (311 aa). ATP-binding positions include 662 to 670 and Lys-685; that span reads IEKQAYWLM.

Belongs to the protein kinase superfamily.

The protein localises to the cell membrane. Functionally, during early embryogenesis, controls asymmetric cell division and the asymmetric localization of P granules of germline precursor P2 and its descendant P3. Probably upstream of tyrosine kinase src-1, plays a role in endoderm development by controlling spindle orientation during EMS blastomere cell division. Controls EMS spindle orientation probably by promoting lin-5 and gpr-1/2 enrichment at, and let-99 exclusion from the junction between P2 and EMS cells. This chain is Protein mes-1, found in Caenorhabditis elegans.